A 393-amino-acid polypeptide reads, in one-letter code: NAD(P)H-quinone oxidoreductase subunit H, chloroplastic (393 aa).

Belongs to the complex I 49 kDa subunit family. In terms of assembly, NDH is composed of at least 16 different subunits, 5 of which are encoded in the nucleus.

The protein resides in the plastid. The protein localises to the chloroplast thylakoid membrane. The enzyme catalyses a plastoquinone + NADH + (n+1) H(+)(in) = a plastoquinol + NAD(+) + n H(+)(out). The catalysed reaction is a plastoquinone + NADPH + (n+1) H(+)(in) = a plastoquinol + NADP(+) + n H(+)(out). Its function is as follows. NDH shuttles electrons from NAD(P)H:plastoquinone, via FMN and iron-sulfur (Fe-S) centers, to quinones in the photosynthetic chain and possibly in a chloroplast respiratory chain. The immediate electron acceptor for the enzyme in this species is believed to be plastoquinone. Couples the redox reaction to proton translocation, and thus conserves the redox energy in a proton gradient. In Lolium perenne (Perennial ryegrass), this protein is NAD(P)H-quinone oxidoreductase subunit H, chloroplastic.